The following is a 523-amino-acid chain: Maintenance of mitochondrial morphology protein 1 (523 aa).

The Lumenal segment spans residues 1–43 (MAGSTSASLQTPYFPSSTQINPVRVDHTLPLPPSQPSLSFTQG). Residues 44-64 (LLVGQLSVVLLIGAFIKFFIF) form a helical membrane-spanning segment. Residues 65–523 (GEAPPPPSRG…GSMPDTVTET (459 aa)) are Cytoplasmic-facing. Disordered regions lie at residues 70-118 (PPSR…SSST), 128-147 (YYSA…RLYH), 295-349 (TSDQ…SKHG), 420-474 (RTGL…DRGL), and 492-523 (GGHQ…VTET). 2 stretches are compositionally biased toward polar residues: residues 74 to 96 (GLSN…TDSS) and 105 to 118 (STSN…SSST). A compositionally biased stretch (basic residues) spans 137–147 (TPKHGRPRLYH). The 262-residue stretch at 151-412 (QPESLDWFNV…EPRVQVVGLP (262 aa)) folds into the SMP-LTD domain. Over residues 295 to 312 (TSDQTMSPIPTPHDTTSE) the composition is skewed to polar residues. Over residues 449–468 (GVSGGGGSGGGSGGGGGGMR) the composition is skewed to gly residues.

It belongs to the MMM1 family. As to quaternary structure, homodimer. Component of the ER-mitochondria encounter structure (ERMES) or MDM complex, composed of MMM1, MDM10, MDM12 and MDM34. An MMM1 homodimer associates with one molecule of MDM12 on each side in a pairwise head-to-tail manner, and the SMP-LTD domains of MMM1 and MDM12 generate a continuous hydrophobic tunnel for phospholipid trafficking.

It is found in the endoplasmic reticulum membrane. Its function is as follows. Component of the ERMES/MDM complex, which serves as a molecular tether to connect the endoplasmic reticulum (ER) and mitochondria. Components of this complex are involved in the control of mitochondrial shape and protein biogenesis, and function in nonvesicular lipid trafficking between the ER and mitochondria. The MDM12-MMM1 subcomplex functions in the major beta-barrel assembly pathway that is responsible for biogenesis of all outer membrane beta-barrel proteins, and acts in a late step after the SAM complex. The MDM10-MDM12-MMM1 subcomplex further acts in the TOM40-specific pathway after the action of the MDM12-MMM1 complex. Essential for establishing and maintaining the structure of mitochondria and maintenance of mtDNA nucleoids. The chain is Maintenance of mitochondrial morphology protein 1 from Paracoccidioides lutzii (strain ATCC MYA-826 / Pb01) (Paracoccidioides brasiliensis).